Consider the following 272-residue polypeptide: Ribosome maturation factor RimP (272 aa).

Residues 209-272 form a disordered region; sequence QNLGILPPPP…RGDIDPPEGD (64 aa). The segment covering 250–266 has biased composition (basic and acidic residues); it reads NTKEHRLAAERLRRGDI.

This sequence belongs to the RimP family.

It is found in the cytoplasm. Required for maturation of 30S ribosomal subunits. In Rhodopseudomonas palustris (strain BisA53), this protein is Ribosome maturation factor RimP.